Here is a 327-residue protein sequence, read N- to C-terminus: Gibberellin 2-beta-dioxygenase 1 (327 aa).

In terms of domain architecture, Fe2OG dioxygenase spans 171–276 (QSDCLFRVNH…RLSMIYFCGP (106 aa)). The Fe cation site is built by His200, Asp202, and His257. Residue Arg267 is part of the active site.

This sequence belongs to the iron/ascorbate-dependent oxidoreductase family. GA2OX subfamily. Fe cation is required as a cofactor. Predominantly expressed in roots, flowers, young fruits and seeds.

It catalyses the reaction gibberellin A1 + 2-oxoglutarate + O2 = gibberellin A8 + succinate + CO2. It functions in the pathway plant hormone biosynthesis; gibberellin biosynthesis. In terms of biological role, catalyzes the 2-beta-hydroxylation of several biologically active gibberellins, leading to the homeostatic regulation of their endogenous level. Catabolism of gibberellins (GAs) plays a central role in plant development. Converts GA9/GA20 to GA51/GA29 and GA4/GA1 to GA34/GA8. The protein is Gibberellin 2-beta-dioxygenase 1 (GA2OX1) of Pisum sativum (Garden pea).